We begin with the raw amino-acid sequence, 542 residues long: TNF receptor-associated factor 6 (542 aa).

The segment at 1 to 374 (MSLLHCENSC…EAQQCNGIYI (374 aa)) is interaction with TAX1BP1. The segment at 71–110 (CPICLMALREAVQTPCGHRFCKACIIKSIRDAGHKCPVDN) adopts an RING-type; degenerate zinc-finger fold. K125 is covalently cross-linked (Glycyl lysine isopeptide (Lys-Gly) (interchain with G-Cter in SUMO); alternate). Residue K125 forms a Glycyl lysine isopeptide (Lys-Gly) (interchain with G-Cter in ubiquitin); alternate linkage. A Glycyl lysine isopeptide (Lys-Gly) (interchain with G-Cter in SUMO) cross-link involves residue K143. 2 TRAF-type zinc fingers span residues 151–203 (EHQA…EDKE) and 204–260 (IHEQ…NHLA). Positions 310–368 (SEVHNFQETIQQLEGRLVRQDHQIRELTAKMETQSMYVNELKRTIRTLEDKVAEIEAQQ) form a coiled coil. Residue K339 forms a Glycyl lysine isopeptide (Lys-Gly) (interchain with G-Cter in ubiquitin) linkage. The 150-residue stretch at 370 to 519 (NGIYIWKIGN…DDTLLVRCEV (150 aa)) folds into the MATH domain. The segment at 375 to 542 (WKIGNFGMHL…FQPRSTDSGI (168 aa)) is interaction with TANK. Residue K473 forms a Glycyl lysine isopeptide (Lys-Gly) (interchain with G-Cter in SUMO) linkage.

It belongs to the TNF receptor-associated factor family. A subfamily. Homotrimer. Homooligomer. N-terminal region is dimeric while C-terminal region is trimeric; maybe providing a mode of oligomerization. Upon IL1B treatment, forms a complex with PELI1, IRAK1, IRAK4 and MYD88; this complex recruits MAP3K7/TAK1, TAB1 and TAB2 to mediate NF-kappa-B activation. Direct binding of SMAD6 to PELI1 prevents the complex formation and hence negatively regulates IL1R-TLR signaling and eventually NF-kappa-B-mediated gene expression. Binds to TNFRSF5/CD40 and TNFRSF11A/RANK. Associates with NGFR, TNFRSF17, IRAK2, IRAK3, RIPK2, MAP3K1, MAP3K5, MAP3K14, CSK, TRAF, TRAF-interacting protein TRIP and TNF receptor associated protein TDP2. Interacts with IL17R. Interacts with SQSTM1 bridging NTRK1 and NGFR. Forms a ternary complex with SQSTM1 and PRKCZ. Interacts with PELI2 and PELI3. Binds UBE2V1. Interacts with TAX1BP1; this interaction mediates deubiquitination of TRAF6 and inhibition of NF-kappa-B activation. Interacts with ZNF675. Interacts with ARRB1 and ARRB2. Interacts with MAP3K7 and TAB1/MAP3K7IP1; during IL-1 signaling. Interacts with UBE2N. Interacts with TGFBR1, HDAC1 and RANGAP1. Interacts with AKT1, AKT2 and AKT3. Interacts (via TRAF domains) with NUMBL (via C-terminal). Interacts with RBCK1. Interacts with LIMD1 (via LIM domains). Interacts with RSAD2/viperin. Interacts (via C-terminus) with EIF2AK2/PKR (via the kinase catalytic domain). Interacts with ZFAND5. Interacts with IL1RL1. Interacts with TRAFD1. Interacts with AJUBA. Interacts with MAVS/IPS1. Interacts (via TRAF domains) with DYNC2I2 (via WD domains). Interacts with IFIT3 (via N-terminus). Interacts with TICAM2. Interacts with CARD14. Interacts with CD40 and MAP3K8; the interaction is required for ERK activation. Interacts with TICAM1 and this interaction is enhanced in the presence of WDFY1. Interacts with TANK; this interaction increases in response to DNA damage. Interacts with USP10; this interaction increases in response to DNA damage. Interacts with ZC3H12A; this interaction increases in response to DNA damage and is stimulated by TANK. Interacts with WDFY3. Interacts with TRIM13. Interacts with GPS2. Interacts (via C-terminus) with SASH1. Interacts with LRRC19. Interacts with IL17RA and TRAF3IP2. Interacts with TOMM70. Interacts with AMBRA1; interaction is required to mediate 'Lys-63'-linked ubiquitination of ULK1. Interacts with CRBN; this interaction inhibits TLR4-mediated signaling by preventing TRAF6-mediated ubiquitination of ECSIT. Sumoylated on Lys-125, Lys-143 and Lys-473 with SUMO1. Post-translationally, polyubiquitinated on Lys-125 by TRAF3IP2; after cell stimulation with IL17A. Polyubiquitinated on Lys-125; after cell stimulation with IL1B or TGFB. This ligand-induced cell stimulation leads to dimerization/oligomerization of TRAF6 molecules, followed by auto-ubiquitination which involves UBE2N and UBE2V1 and leads to TRAF6 activation. This 'Lys-63' site-specific poly-ubiquitination appears to be associated with the activation of signaling molecules. Endogenous autoubiquitination occurs only for the cytoplasmic form. Deubiquitinated by USP10 in a TANK-dependent manner, leading to the negative regulation of NF-kappa-B signaling upon DNA damage. LRRC19 induces 'Lys-63' ubiquitination. Ubiquitinated at Lys-339 by the SCF(FBXL2) complex, leading to its degradation by the proteasome.

The protein localises to the cytoplasm. It is found in the cell cortex. The protein resides in the nucleus. Its subcellular location is the lipid droplet. It catalyses the reaction S-ubiquitinyl-[E2 ubiquitin-conjugating enzyme]-L-cysteine + [acceptor protein]-L-lysine = [E2 ubiquitin-conjugating enzyme]-L-cysteine + N(6)-ubiquitinyl-[acceptor protein]-L-lysine.. It participates in protein modification; protein ubiquitination. In terms of biological role, E3 ubiquitin ligase that, together with UBE2N and UBE2V1, mediates the synthesis of 'Lys-63'-linked-polyubiquitin chains conjugated to proteins, such as ECSIT, IKBKG, IRAK1, AKT1 and AKT2. Also mediates ubiquitination of free/unanchored polyubiquitin chain that leads to MAP3K7 activation. Leads to the activation of NF-kappa-B and JUN. Seems to also play a role in dendritic cells (DCs) maturation and/or activation. Represses c-Myb-mediated transactivation, in B-lymphocytes. Adapter protein that seems to play a role in signal transduction initiated via TNF receptor, IL-1 receptor and IL-17 receptor. Regulates osteoclast differentiation by mediating the activation of adapter protein complex 1 (AP-1) and NF-kappa-B, in response to RANK-L stimulation. Together with MAP3K8, mediates CD40 signals that activate ERK in B-cells and macrophages, and thus may play a role in the regulation of immunoglobulin production. Acts as a regulator of the JNK and NF-kappa-B signaling pathways by initiating assembly of heterotypic 'Lys-63'-/'Lys-48'-linked branched ubiquitin chains that are then recognized by TAB2: TRAF6 catalyzes initial 'Lys-63'-linked-polyubiquitin chains that are then branched via 'Lys-48'-linked polyubiquitin by HUWE1. 'Lys-63'-/'Lys-48'-linked branched ubiquitin chains protect 'Lys-63'-linkages from CYLD deubiquitination. Also participates in the TCR signaling by ubiquitinating LAT. The protein is TNF receptor-associated factor 6 (TRAF6) of Bos taurus (Bovine).